Consider the following 405-residue polypeptide: Cystathionine gamma-lyase (405 aa).

Substrate is bound by residues arginine 62, tyrosine 114, and arginine 119. Lysine 212 carries the N6-(pyridoxal phosphate)lysine modification. Glutamate 339 contributes to the substrate binding site.

Belongs to the trans-sulfuration enzymes family. Homotetramer. Interacts with CALM in a calcium-dependent manner. Pyridoxal 5'-phosphate is required as a cofactor.

The protein resides in the cytoplasm. The enzyme catalyses L,L-cystathionine + H2O = 2-oxobutanoate + L-cysteine + NH4(+). It carries out the reaction L-cysteine + H2O = hydrogen sulfide + pyruvate + NH4(+) + H(+). The catalysed reaction is L-homocysteine + H2O = 2-oxobutanoate + hydrogen sulfide + NH4(+) + H(+). It catalyses the reaction L-homoserine = 2-oxobutanoate + NH4(+). The enzyme catalyses L-selenocystathionine + H2O = L-selenocysteine + 2-oxobutanoate + NH4(+). It functions in the pathway amino-acid biosynthesis; L-cysteine biosynthesis; L-cysteine from L-homocysteine and L-serine: step 2/2. Catalyzes the last step in the trans-sulfuration pathway from L-methionine to L-cysteine in a pyridoxal-5'-phosphate (PLP)-dependent manner, which consists on cleaving the L,L-cystathionine molecule into L-cysteine, ammonia and 2-oxobutanoate. Part of the L-cysteine derived from the trans-sulfuration pathway is utilized for biosynthesis of the ubiquitous antioxidant glutathione. Besides its role in the conversion of L-cystathionine into L-cysteine, it utilizes L-cysteine and L-homocysteine as substrates (at much lower rates than L,L-cystathionine) to produce hydrogen sulfide (H2S). In vitro, it converts two L-cysteine molecules into lanthionine and H2S, and two L-homocysteine molecules to homolanthionine and H2S, which can be particularly relevant under conditions of severe hyperhomocysteinemia. Lanthionine and homolanthionine are structural homologs of L,L-cystathionine that differ by the absence or presence of an extra methylene group, respectively. Acts as a cysteine-protein sulfhydrase by mediating sulfhydration of target proteins: sulfhydration consists of converting -SH groups into -SSH on specific cysteine residues of target proteins such as GAPDH, PTPN1 and NF-kappa-B subunit RELA, thereby regulating their function. By generating the gasotransmitter H2S, it participates in a number of physiological processes such as vasodilation, bone protection, and inflammation. Plays an essential role in myogenesis by contributing to the biogenesis of H2S in skeletal muscle tissue. Can also accept homoserine as substrate. Catalyzes the elimination of selenocystathionine (which can be derived from the diet) to yield selenocysteine, ammonia and 2-oxobutanoate. In Sus scrofa (Pig), this protein is Cystathionine gamma-lyase (CTH).